Reading from the N-terminus, the 155-residue chain is UPF0461 protein C5orf24 homolog (155 aa).

Residues 60 to 69 (NETHLQTSTS) are compositionally biased toward polar residues. The tract at residues 60 to 155 (NETHLQTSTS…QQALMCSSDA (96 aa)) is disordered. Basic residues predominate over residues 78–92 (LKKKKNVGRSGKRGR). Residues 94–107 (SGTTKSAGYRTSTG) are compositionally biased toward polar residues.

This sequence belongs to the UPF0461 family.

The polypeptide is UPF0461 protein C5orf24 homolog (Xenopus laevis (African clawed frog)).